Here is a 268-residue protein sequence, read N- to C-terminus: Pantothenate synthetase (268 aa).

An ATP-binding site is contributed by 18-25 (MGYLHEGH). Residue H25 is the Proton donor of the active site. Q49 is a (R)-pantoate binding site. Beta-alanine is bound at residue Q49. Residue 135 to 138 (GQKD) participates in ATP binding. Q141 is a binding site for (R)-pantoate. ATP contacts are provided by residues V164 and 172-175 (LSSR).

The protein belongs to the pantothenate synthetase family. In terms of assembly, homodimer.

It is found in the cytoplasm. The enzyme catalyses (R)-pantoate + beta-alanine + ATP = (R)-pantothenate + AMP + diphosphate + H(+). Its pathway is cofactor biosynthesis; (R)-pantothenate biosynthesis; (R)-pantothenate from (R)-pantoate and beta-alanine: step 1/1. Functionally, catalyzes the condensation of pantoate with beta-alanine in an ATP-dependent reaction via a pantoyl-adenylate intermediate. In Dehalococcoides mccartyi (strain ATCC BAA-2266 / KCTC 15142 / 195) (Dehalococcoides ethenogenes (strain 195)), this protein is Pantothenate synthetase.